A 430-amino-acid polypeptide reads, in one-letter code: Long-chain specific acyl-CoA dehydrogenase, mitochondrial (430 aa).

A mitochondrion-targeting transit peptide spans 1–30; sequence MATRLLRGSLRLWGGLCAPRLPTASRCSHS. The residue at position 42 (Lys42) is an N6-acetyllysine. Phosphoserine occurs at positions 54 and 55. Lys66 and Lys81 each carry N6-acetyllysine; alternate. Residues Lys66 and Lys81 each carry the N6-succinyllysine; alternate modification. N6-acetyllysine is present on residues Lys92 and Lys95. Lys165 carries the post-translational modification N6-succinyllysine. Residues 170-179 and 203-205 each bind FAD; these read IAMTEPGAGS and FIT. A substrate-binding site is contributed by Ser179. Residue 227–228 coordinates substrate; that stretch reads AH. An N6-succinyllysine modification is found at Lys240. Lys254 and Lys279 each carry N6-acetyllysine; alternate. N6-succinyllysine; alternate occurs at positions 254 and 279. Substrate-binding positions include Tyr282 and 289-292; that span reads PQER. The Proton acceptor role is filled by Glu291. Arg317 is a binding site for FAD. Residue Lys318 is modified to N6-acetyllysine. Lys322 bears the N6-acetyllysine; alternate mark. Lys322 carries the N6-succinyllysine; alternate modification. Residue Gln328 participates in FAD binding. The residue at position 358 (Lys358) is an N6-acetyllysine. Position 362 is a phosphoserine (Ser362). Residue 385–389 coordinates FAD; that stretch reads QLHGG. 412-413 contacts substrate; the sequence is GG. FAD is bound at residue 414–416; that stretch reads TNE.

It belongs to the acyl-CoA dehydrogenase family. In terms of assembly, homotetramer. FAD is required as a cofactor. In terms of processing, acetylation at Lys-318 and Lys-322 in proximity of the cofactor-binding sites strongly reduces catalytic activity. These sites are deacetylated by SIRT3.

Its subcellular location is the mitochondrion matrix. It catalyses the reaction a long-chain 2,3-saturated fatty acyl-CoA + oxidized [electron-transfer flavoprotein] + H(+) = a long-chain (2E)-enoyl-CoA + reduced [electron-transfer flavoprotein]. The catalysed reaction is hexanoyl-CoA + oxidized [electron-transfer flavoprotein] + H(+) = (2E)-hexenoyl-CoA + reduced [electron-transfer flavoprotein]. The enzyme catalyses octanoyl-CoA + oxidized [electron-transfer flavoprotein] + H(+) = (2E)-octenoyl-CoA + reduced [electron-transfer flavoprotein]. It carries out the reaction decanoyl-CoA + oxidized [electron-transfer flavoprotein] + H(+) = (2E)-decenoyl-CoA + reduced [electron-transfer flavoprotein]. It catalyses the reaction dodecanoyl-CoA + oxidized [electron-transfer flavoprotein] + H(+) = (2E)-dodecenoyl-CoA + reduced [electron-transfer flavoprotein]. The catalysed reaction is tetradecanoyl-CoA + oxidized [electron-transfer flavoprotein] + H(+) = (2E)-tetradecenoyl-CoA + reduced [electron-transfer flavoprotein]. The enzyme catalyses oxidized [electron-transfer flavoprotein] + hexadecanoyl-CoA + H(+) = (2E)-hexadecenoyl-CoA + reduced [electron-transfer flavoprotein]. It carries out the reaction octadecanoyl-CoA + oxidized [electron-transfer flavoprotein] + H(+) = (2E)-octadecenoyl-CoA + reduced [electron-transfer flavoprotein]. It catalyses the reaction eicosanoyl-CoA + oxidized [electron-transfer flavoprotein] + H(+) = (2E)-eicosenoyl-CoA + reduced [electron-transfer flavoprotein]. The catalysed reaction is docosanoyl-CoA + oxidized [electron-transfer flavoprotein] + H(+) = (2E)-docosenoyl-CoA + reduced [electron-transfer flavoprotein]. The enzyme catalyses tetracosanoyl-CoA + oxidized [electron-transfer flavoprotein] + H(+) = (2E)-tetracosenoyl-CoA + reduced [electron-transfer flavoprotein]. It carries out the reaction (5E)-tetradecenoyl-CoA + oxidized [electron-transfer flavoprotein] + H(+) = (2E,5E)-tetradecadienoyl-CoA + reduced [electron-transfer flavoprotein]. It catalyses the reaction (5Z)-tetradecenoyl-CoA + oxidized [electron-transfer flavoprotein] + H(+) = (2E,5Z)-tetradecadienoyl-CoA + reduced [electron-transfer flavoprotein]. The catalysed reaction is oxidized [electron-transfer flavoprotein] + (9Z)-octadecenoyl-CoA + H(+) = (2E,9Z)-octadecadienoyl-CoA + reduced [electron-transfer flavoprotein]. Its pathway is lipid metabolism; mitochondrial fatty acid beta-oxidation. Its function is as follows. Long-chain specific acyl-CoA dehydrogenase is one of the acyl-CoA dehydrogenases that catalyze the first step of mitochondrial fatty acid beta-oxidation, an aerobic process breaking down fatty acids into acetyl-CoA and allowing the production of energy from fats. The first step of fatty acid beta-oxidation consists in the removal of one hydrogen from C-2 and C-3 of the straight-chain fatty acyl-CoA thioester, resulting in the formation of trans-2-enoyl-CoA. Among the different mitochondrial acyl-CoA dehydrogenases, long-chain specific acyl-CoA dehydrogenase can act on saturated and unsaturated acyl-CoAs with 6 to 24 carbons with a preference for 8 to 18 carbons long primary chains. This is Long-chain specific acyl-CoA dehydrogenase, mitochondrial from Sus scrofa (Pig).